A 448-amino-acid chain; its full sequence is MNKLEEHYIVPKDVVAELDKYIIGQDEAKKLVSIALVNRYIRSRLPKEIKDEVMPKNIIMIGSTGIGKTEIARRLSKLIKAPFIKVEATKYTEVGYVGRDVESMVRDLMSIAVNMVKEEMYSTVRDDALVRTEERIVDSLFKGSSNSENMDPNEIKAEEKVKEKLRKKLRAGELDDTTIEIQISSKMPFSTIEIFTGGNFEEIDMGIGGLLGNIFDRKKKRELKIKKAKEIILAEELEKLVDHENISDIAKSKVENMGIIFIDEIDKIAAKNRSGNDVSREGVQRDILPIIEGSKVNTKYGIVDTSHILFIAAGAFNLAKPSDLIPELQGRFPIKVELKSLSIDDLKKILKQTKNSLIKQYVAMFKVYDLDLKFSEEAIDRIAELTFNMNLESENLGARRLHGVMEIVLADLFFEVPGSKLKKFEINLDYVNKKIQINEQKDLNYYII.

ATP is bound by residues isoleucine 23, 65–70 (GIGKTE), aspartate 263, glutamate 327, and arginine 399.

Belongs to the ClpX chaperone family. HslU subfamily. A double ring-shaped homohexamer of HslV is capped on each side by a ring-shaped HslU homohexamer. The assembly of the HslU/HslV complex is dependent on binding of ATP.

It localises to the cytoplasm. In terms of biological role, ATPase subunit of a proteasome-like degradation complex; this subunit has chaperone activity. The binding of ATP and its subsequent hydrolysis by HslU are essential for unfolding of protein substrates subsequently hydrolyzed by HslV. HslU recognizes the N-terminal part of its protein substrates and unfolds these before they are guided to HslV for hydrolysis. In Borreliella burgdorferi (strain ATCC 35210 / DSM 4680 / CIP 102532 / B31) (Borrelia burgdorferi), this protein is ATP-dependent protease ATPase subunit HslU.